The sequence spans 232 residues: Myb-related protein 308 (232 aa).

HTH myb-type domains lie at 9-61 and 62-116; these read KAHT…INYL and RPDL…RRKL. DNA-binding regions (H-T-H motif) lie at residues 37 to 61 and 89 to 112; these read WRSL…INYL and WSLI…NTHI.

In terms of tissue distribution, expressed in roots, stems, leaves, seed pods and flowers.

The protein localises to the nucleus. Transcription factor. The sequence is that of Myb-related protein 308 from Antirrhinum majus (Garden snapdragon).